Consider the following 141-residue polypeptide: Nucleoside diphosphate kinase (141 aa).

ATP contacts are provided by lysine 11, phenylalanine 59, arginine 87, threonine 93, arginine 104, and asparagine 114. Histidine 117 (pros-phosphohistidine intermediate) is an active-site residue.

The protein belongs to the NDK family. As to quaternary structure, homotetramer. The cofactor is Mg(2+).

It localises to the cytoplasm. The enzyme catalyses a 2'-deoxyribonucleoside 5'-diphosphate + ATP = a 2'-deoxyribonucleoside 5'-triphosphate + ADP. It carries out the reaction a ribonucleoside 5'-diphosphate + ATP = a ribonucleoside 5'-triphosphate + ADP. Its function is as follows. Major role in the synthesis of nucleoside triphosphates other than ATP. The ATP gamma phosphate is transferred to the NDP beta phosphate via a ping-pong mechanism, using a phosphorylated active-site intermediate. The polypeptide is Nucleoside diphosphate kinase (Xylella fastidiosa (strain M23)).